Reading from the N-terminus, the 388-residue chain is Succinyl-diaminopimelate desuccinylase (388 aa).

His-74 is a Zn(2+) binding site. Asp-76 is an active-site residue. Asp-107 lines the Zn(2+) pocket. Glu-142 acts as the Proton acceptor in catalysis. Zn(2+)-binding residues include Glu-143, Glu-171, and His-360.

It belongs to the peptidase M20A family. DapE subfamily. In terms of assembly, homodimer. It depends on Zn(2+) as a cofactor. The cofactor is Co(2+).

The catalysed reaction is N-succinyl-(2S,6S)-2,6-diaminopimelate + H2O = (2S,6S)-2,6-diaminopimelate + succinate. It functions in the pathway amino-acid biosynthesis; L-lysine biosynthesis via DAP pathway; LL-2,6-diaminopimelate from (S)-tetrahydrodipicolinate (succinylase route): step 3/3. Its function is as follows. Catalyzes the hydrolysis of N-succinyl-L,L-diaminopimelic acid (SDAP), forming succinate and LL-2,6-diaminopimelate (DAP), an intermediate involved in the bacterial biosynthesis of lysine and meso-diaminopimelic acid, an essential component of bacterial cell walls. This Rhodopseudomonas palustris (strain BisB5) protein is Succinyl-diaminopimelate desuccinylase.